Consider the following 74-residue polypeptide: Conotoxin Vc6.8 (74 aa).

An N-terminal signal peptide occupies residues 1-19 (MEKLTILLLVAAVLMSTQA). Residues 20–34 (LMQEQRQKAKINLFS) constitute a propeptide that is removed on maturation. 3 cysteine pairs are disulfide-bonded: Cys49–Cys62, Cys55–Cys66, and Cys61–Cys70.

The protein belongs to the conotoxin O2 superfamily. In terms of tissue distribution, expressed by the venom duct.

Its subcellular location is the secreted. Functionally, inhibits voltage-gated ion channels. The polypeptide is Conotoxin Vc6.8 (Conus victoriae (Queen Victoria cone)).